Here is a 302-residue protein sequence, read N- to C-terminus: Protein ECM11 (302 aa).

Disordered regions lie at residues Met-1–Gln-67 and Ser-162–Gln-187. Positions Asn-35–Gly-46 are enriched in polar residues. Over residues Ala-56–Gln-67 the composition is skewed to basic and acidic residues. The span at Ser-162–Pro-171 shows a compositional bias: polar residues.

In terms of assembly, interacts with CDC6.

It is found in the nucleus. May be involved in cell wall organization and biogenesis. The chain is Protein ECM11 (ECM11) from Saccharomyces cerevisiae (strain ATCC 204508 / S288c) (Baker's yeast).